A 324-amino-acid chain; its full sequence is Envelope protein H3 (324 aa).

The Virion surface portion of the chain corresponds to M1–G284. Residues L285–F305 form a helical; Signal-anchor membrane-spanning segment. At N306–I324 the chain is on the intravirion side.

The protein belongs to the orthopoxvirus OPG108 family. In terms of processing, does not contain disulfide bonds.

It is found in the virion membrane. Envelope protein that binds to heparan sulfate on the cell surface and might provide virion attachment to target cell. This is Envelope protein H3 (OPG108) from Homo sapiens (Human).